The chain runs to 679 residues: Sodium-dependent phosphate transporter 1 (679 aa).

The next 6 helical transmembrane spans lie at 21–41 (YLWMLILGFIIAFVLAFSVGA), 62–82 (ACILASIFETVGSVLLGAKVS), 100–120 (GLLMAGSVSAMFGSAVWQLVA), 158–178 (IVMSWFVSPLLSGIMSGILFF), 203–223 (ACTVGINLFSIMYTGAPLLGF), and 230–250 (GTILISVGCAVFCALIVWFFV). Ser265 and Ser269 each carry phosphoserine. Positions 268–288 (ESPLMEKKNSLKEDHEETKLS) are disordered. A compositionally biased stretch (basic and acidic residues) spans 271–286 (LMEKKNSLKEDHEETK). Helical transmembrane passes span 511–531 (VSLLFQFLQILTACFGSFAHG), 558–578 (VATPIWLLLYGGVGICIGLWV), 600–620 (FSIELASALTVVIASNIGLPI), and 650–670 (IFMAWFVTVPISGVISAAIMA). The tract at residues 550-558 (DTGDVSSKV) is a.

Belongs to the inorganic phosphate transporter (PiT) (TC 2.A.20) family.

The protein localises to the cell membrane. The catalysed reaction is 2 Na(+)(out) + phosphate(out) = 2 Na(+)(in) + phosphate(in). Sodium-phosphate symporter which preferentially transports the monovalent form of phosphate with a stoichiometry of two sodium ions per phosphate ion. May play a role in extracellular matrix and cartilage calcification as well as in vascular calcification. Essential for cell proliferation but this function is independent of its phosphate transporter activity. The protein is Sodium-dependent phosphate transporter 1 (SLC20A1) of Pongo abelii (Sumatran orangutan).